Reading from the N-terminus, the 115-residue chain is T-cell receptor gamma chain V region V108B (115 aa).

An N-terminal signal peptide occupies residues Met1–Gly18. The v segment stretch occupies residues Gln19–Ile115.

In Mus musculus (Mouse), this protein is T-cell receptor gamma chain V region V108B (Tcrg-V1).